A 112-amino-acid chain; its full sequence is uncharacterized protein (112 aa).

A mitochondrion-targeting transit peptide spans 1-21 (MYLSAQLMRTVTASHLTLRAL).

It is found in the mitochondrion. This is an uncharacterized protein from Saccharomyces cerevisiae (strain ATCC 204508 / S288c) (Baker's yeast).